The chain runs to 118 residues: Large ribosomal subunit protein uL18 (118 aa).

It belongs to the universal ribosomal protein uL18 family. In terms of assembly, part of the 50S ribosomal subunit; part of the 5S rRNA/L5/L18/L25 subcomplex. Contacts the 5S and 23S rRNAs.

In terms of biological role, this is one of the proteins that bind and probably mediate the attachment of the 5S RNA into the large ribosomal subunit, where it forms part of the central protuberance. The protein is Large ribosomal subunit protein uL18 of Sulfurovum sp. (strain NBC37-1).